The sequence spans 331 residues: Myc-associated zinc finger protein (331 aa).

Disordered regions lie at residues 46–65 and 108–131; these read AQSP…APAA and TVDT…SAPA. The span at 117–127 shows a compositional bias: pro residues; it reads PPAPPPPPPAV. 4 C2H2-type zinc fingers span residues 177–199, 266–288, 294–316, and 324–331; these read YICA…EAIH, HACE…KLSH, YQCP…VRSH, and YNCSHCGK.

As to quaternary structure, interacts with BPTF. In terms of tissue distribution, ubiquitously expressed.

It is found in the nucleus. Its function is as follows. Transcriptional regulator. Acts as a transcriptional activator that binds to purine-rich GAGA sites found in the promoter of many genes including insulin I and II and islet amyloid polypeptide. The polypeptide is Myc-associated zinc finger protein (MAZ) (Mesocricetus auratus (Golden hamster)).